A 133-amino-acid chain; its full sequence is Small ribosomal subunit protein uS8 (133 aa).

Residues 1–32 (MANHDPISDMLTRIRNASEKRHESTKVPASRM) are disordered. The segment covering 16-25 (NASEKRHEST) has biased composition (basic and acidic residues).

It belongs to the universal ribosomal protein uS8 family. As to quaternary structure, part of the 30S ribosomal subunit. Contacts proteins S5 and S12.

In terms of biological role, one of the primary rRNA binding proteins, it binds directly to 16S rRNA central domain where it helps coordinate assembly of the platform of the 30S subunit. The chain is Small ribosomal subunit protein uS8 from Synechococcus sp. (strain CC9311).